A 483-amino-acid chain; its full sequence is Cobyric acid synthase (483 aa).

The region spanning Ser251–Phe438 is the GATase cobBQ-type domain. Cys333 functions as the Nucleophile in the catalytic mechanism. His430 is a catalytic residue.

Belongs to the CobB/CobQ family. CobQ subfamily.

The protein operates within cofactor biosynthesis; adenosylcobalamin biosynthesis. Functionally, catalyzes amidations at positions B, D, E, and G on adenosylcobyrinic A,C-diamide. NH(2) groups are provided by glutamine, and one molecule of ATP is hydrogenolyzed for each amidation. The protein is Cobyric acid synthase of Brucella anthropi (strain ATCC 49188 / DSM 6882 / CCUG 24695 / JCM 21032 / LMG 3331 / NBRC 15819 / NCTC 12168 / Alc 37) (Ochrobactrum anthropi).